The following is a 205-amino-acid chain: Ephrin-A1 (205 aa).

Residues 1–17 form the signal peptide; it reads MEFLWAPLLGLCCSLAA. The region spanning 18-151 is the Ephrin RBD domain; that stretch reads ADRHIVFWNS…KLKVTVNGKI (134 aa). An N-linked (GlcNAc...) asparagine glycan is attached at Asn26. Cystine bridges form between Cys51/Cys92 and Cys80/Cys140. A lipid anchor (GPI-anchor amidated serine) is attached at Ser182. Positions 183–205 are cleaved as a propeptide — removed in mature form; that stretch reads AAPRLFPLVWAVLLLPLLLLQTQ.

Belongs to the ephrin family. Monomer. Homodimer. Forms heterodimers with EPHA2. Binds to the receptor tyrosine kinases EPHA2, EPHA3, EPHA4, EPHA5, EPHA6 and EPHA7. Also binds with low affinity to EPHA1. In terms of processing, undergoes proteolysis by a metalloprotease to give rise to a soluble monomeric form. Post-translationally, N-Glycosylation is required for binding to EPHA2 receptor and inducing its internalization.

The protein resides in the cell membrane. The protein localises to the secreted. Functionally, cell surface GPI-bound ligand for Eph receptors, a family of receptor tyrosine kinases which are crucial for migration, repulsion and adhesion during neuronal, vascular and epithelial development. Binds promiscuously Eph receptors residing on adjacent cells, leading to contact-dependent bidirectional signaling into neighboring cells. Plays an important role in angiogenesis and tumor neovascularization. The recruitment of VAV2, VAV3 and PI3-kinase p85 subunit by phosphorylated EPHA2 is critical for EFNA1-induced RAC1 GTPase activation and vascular endothelial cell migration and assembly. Exerts anti-oncogenic effects in tumor cells through activation and down-regulation of EPHA2. Activates EPHA2 by inducing tyrosine phosphorylation which leads to its internalization and degradation. Acts as a negative regulator in the tumorigenesis of gliomas by down-regulating EPHA2 and FAK. Can evoke collapse of embryonic neuronal growth cone and regulates dendritic spine morphogenesis. In Rattus norvegicus (Rat), this protein is Ephrin-A1 (Efna1).